The primary structure comprises 263 residues: 4-hydroxy-tetrahydrodipicolinate reductase (263 aa).

NAD(+) is bound by residues 7–12, 96–98, and 122–125; these read GFKGRM, GTT, and APNF. Histidine 152 functions as the Proton donor/acceptor in the catalytic mechanism. (S)-2,3,4,5-tetrahydrodipicolinate is bound at residue histidine 153. The active-site Proton donor is lysine 156. (S)-2,3,4,5-tetrahydrodipicolinate is bound at residue 162-163; sequence GT.

This sequence belongs to the DapB family.

The protein localises to the cytoplasm. The enzyme catalyses (S)-2,3,4,5-tetrahydrodipicolinate + NAD(+) + H2O = (2S,4S)-4-hydroxy-2,3,4,5-tetrahydrodipicolinate + NADH + H(+). It carries out the reaction (S)-2,3,4,5-tetrahydrodipicolinate + NADP(+) + H2O = (2S,4S)-4-hydroxy-2,3,4,5-tetrahydrodipicolinate + NADPH + H(+). Its pathway is amino-acid biosynthesis; L-lysine biosynthesis via DAP pathway; (S)-tetrahydrodipicolinate from L-aspartate: step 4/4. Catalyzes the conversion of 4-hydroxy-tetrahydrodipicolinate (HTPA) to tetrahydrodipicolinate. The protein is 4-hydroxy-tetrahydrodipicolinate reductase of Listeria monocytogenes serotype 4b (strain CLIP80459).